The sequence spans 741 residues: Phosphoribosylformylglycinamidine synthase subunit PurL (741 aa).

H53 is an active-site residue. Residues Y56 and K95 each coordinate ATP. Position 97 (E97) interacts with Mg(2+). Substrate-binding positions include 98–101 (SHNH) and R120. The Proton acceptor role is filled by H99. Mg(2+) is bound at residue D121. A substrate-binding site is contributed by Q244. D274 is a Mg(2+) binding site. 318-320 (ESQ) serves as a coordination point for substrate. ATP-binding residues include D501 and G538. Residue N539 coordinates Mg(2+). Substrate is bound at residue S541.

It belongs to the FGAMS family. In terms of assembly, monomer. Part of the FGAM synthase complex composed of 1 PurL, 1 PurQ and 2 PurS subunits.

The protein localises to the cytoplasm. It carries out the reaction N(2)-formyl-N(1)-(5-phospho-beta-D-ribosyl)glycinamide + L-glutamine + ATP + H2O = 2-formamido-N(1)-(5-O-phospho-beta-D-ribosyl)acetamidine + L-glutamate + ADP + phosphate + H(+). It functions in the pathway purine metabolism; IMP biosynthesis via de novo pathway; 5-amino-1-(5-phospho-D-ribosyl)imidazole from N(2)-formyl-N(1)-(5-phospho-D-ribosyl)glycinamide: step 1/2. Its function is as follows. Part of the phosphoribosylformylglycinamidine synthase complex involved in the purines biosynthetic pathway. Catalyzes the ATP-dependent conversion of formylglycinamide ribonucleotide (FGAR) and glutamine to yield formylglycinamidine ribonucleotide (FGAM) and glutamate. The FGAM synthase complex is composed of three subunits. PurQ produces an ammonia molecule by converting glutamine to glutamate. PurL transfers the ammonia molecule to FGAR to form FGAM in an ATP-dependent manner. PurS interacts with PurQ and PurL and is thought to assist in the transfer of the ammonia molecule from PurQ to PurL. The chain is Phosphoribosylformylglycinamidine synthase subunit PurL from Ligilactobacillus salivarius (strain UCC118) (Lactobacillus salivarius).